The sequence spans 369 residues: Anthranilate phosphoribosyltransferase (369 aa).

5-phospho-alpha-D-ribose 1-diphosphate is bound by residues Gly-99, 102–103 (GD), 109–112 (NVST), 127–135 (KHGNRGVSS), and Ser-139. Gly-99 is an anthranilate binding site. A Mg(2+)-binding site is contributed by Ser-111. Asn-130 is a binding site for anthranilate. Residue Arg-185 coordinates anthranilate. Mg(2+)-binding residues include Asp-244 and Glu-245.

It belongs to the anthranilate phosphoribosyltransferase family. Homodimer. Mg(2+) serves as cofactor.

The catalysed reaction is N-(5-phospho-beta-D-ribosyl)anthranilate + diphosphate = 5-phospho-alpha-D-ribose 1-diphosphate + anthranilate. It participates in amino-acid biosynthesis; L-tryptophan biosynthesis; L-tryptophan from chorismate: step 2/5. In terms of biological role, catalyzes the transfer of the phosphoribosyl group of 5-phosphorylribose-1-pyrophosphate (PRPP) to anthranilate to yield N-(5'-phosphoribosyl)-anthranilate (PRA). In Psychrobacter sp. (strain PRwf-1), this protein is Anthranilate phosphoribosyltransferase.